Reading from the N-terminus, the 62-residue chain is Large ribosomal subunit protein bL33 (62 aa).

Belongs to the bacterial ribosomal protein bL33 family.

This is Large ribosomal subunit protein bL33 from Porphyromonas gingivalis (strain ATCC 33277 / DSM 20709 / CIP 103683 / JCM 12257 / NCTC 11834 / 2561).